The primary structure comprises 734 residues: Phosphoribosylformylglycinamidine synthase subunit PurL (734 aa).

Residue histidine 49 is part of the active site. Residues tyrosine 52 and lysine 91 each coordinate ATP. Glutamate 93 is a binding site for Mg(2+). Substrate-binding positions include 94 to 97 and arginine 116; that span reads SHNH. Residue histidine 95 is the Proton acceptor of the active site. Aspartate 117 is a binding site for Mg(2+). Glutamine 240 is a binding site for substrate. Aspartate 268 is a binding site for Mg(2+). 312-314 provides a ligand contact to substrate; it reads ESQ. Positions 491 and 528 each coordinate ATP. Asparagine 529 serves as a coordination point for Mg(2+). Residue serine 531 participates in substrate binding.

It belongs to the FGAMS family. In terms of assembly, monomer. Part of the FGAM synthase complex composed of 1 PurL, 1 PurQ and 2 PurS subunits.

The protein resides in the cytoplasm. It carries out the reaction N(2)-formyl-N(1)-(5-phospho-beta-D-ribosyl)glycinamide + L-glutamine + ATP + H2O = 2-formamido-N(1)-(5-O-phospho-beta-D-ribosyl)acetamidine + L-glutamate + ADP + phosphate + H(+). It functions in the pathway purine metabolism; IMP biosynthesis via de novo pathway; 5-amino-1-(5-phospho-D-ribosyl)imidazole from N(2)-formyl-N(1)-(5-phospho-D-ribosyl)glycinamide: step 1/2. Its function is as follows. Part of the phosphoribosylformylglycinamidine synthase complex involved in the purines biosynthetic pathway. Catalyzes the ATP-dependent conversion of formylglycinamide ribonucleotide (FGAR) and glutamine to yield formylglycinamidine ribonucleotide (FGAM) and glutamate. The FGAM synthase complex is composed of three subunits. PurQ produces an ammonia molecule by converting glutamine to glutamate. PurL transfers the ammonia molecule to FGAR to form FGAM in an ATP-dependent manner. PurS interacts with PurQ and PurL and is thought to assist in the transfer of the ammonia molecule from PurQ to PurL. The polypeptide is Phosphoribosylformylglycinamidine synthase subunit PurL (Zymomonas mobilis subsp. mobilis (strain ATCC 31821 / ZM4 / CP4)).